A 481-amino-acid polypeptide reads, in one-letter code: NADH-quinone oxidoreductase subunit N (481 aa).

14 helical membrane passes run 11-31 (AIPE…DLFW), 38-58 (LAAV…VFEM), 69-89 (FVLD…VLMV), 107-127 (VFVL…GGSL), 128-148 (LSVY…VAFY), 162-182 (FVLG…LYGL), 203-223 (LVLV…LGAA), 237-257 (PTVV…ALII), 271-291 (WQQI…VIAI), 299-319 (MLAY…VAGT), 327-347 (FFYT…ILLV), 370-390 (YAFL…TVGF), 401-421 (VAAG…IGAF), and 457-477 (LALL…FYAM).

This sequence belongs to the complex I subunit 2 family. In terms of assembly, NDH-1 is composed of 14 different subunits. Subunits NuoA, H, J, K, L, M, N constitute the membrane sector of the complex.

Its subcellular location is the cell inner membrane. It catalyses the reaction a quinone + NADH + 5 H(+)(in) = a quinol + NAD(+) + 4 H(+)(out). NDH-1 shuttles electrons from NADH, via FMN and iron-sulfur (Fe-S) centers, to quinones in the respiratory chain. The immediate electron acceptor for the enzyme in this species is believed to be ubiquinone. Couples the redox reaction to proton translocation (for every two electrons transferred, four hydrogen ions are translocated across the cytoplasmic membrane), and thus conserves the redox energy in a proton gradient. The polypeptide is NADH-quinone oxidoreductase subunit N (Acidithiobacillus ferrooxidans (strain ATCC 23270 / DSM 14882 / CIP 104768 / NCIMB 8455) (Ferrobacillus ferrooxidans (strain ATCC 23270))).